The sequence spans 223 residues: Guanylate kinase (223 aa).

The Guanylate kinase-like domain maps to 6-183 (GRLFVMTGAS…AVADFLAILT (178 aa)). Position 13–20 (13–20 (GASGVGKG)) interacts with ATP.

Belongs to the guanylate kinase family.

It localises to the cytoplasm. It catalyses the reaction GMP + ATP = GDP + ADP. In terms of biological role, essential for recycling GMP and indirectly, cGMP. The protein is Guanylate kinase of Thermus thermophilus (strain ATCC 27634 / DSM 579 / HB8).